A 260-amino-acid chain; its full sequence is Hydroxyethylthiazole kinase 1 (260 aa).

Residue Met-39 participates in substrate binding. Residues Arg-115 and Thr-160 each coordinate ATP. Position 187 (Gly-187) interacts with substrate.

This sequence belongs to the Thz kinase family. The cofactor is Mg(2+).

The catalysed reaction is 5-(2-hydroxyethyl)-4-methylthiazole + ATP = 4-methyl-5-(2-phosphooxyethyl)-thiazole + ADP + H(+). It participates in cofactor biosynthesis; thiamine diphosphate biosynthesis; 4-methyl-5-(2-phosphoethyl)-thiazole from 5-(2-hydroxyethyl)-4-methylthiazole: step 1/1. In terms of biological role, catalyzes the phosphorylation of the hydroxyl group of 4-methyl-5-beta-hydroxyethylthiazole (THZ). The chain is Hydroxyethylthiazole kinase 1 from Streptococcus pneumoniae (strain JJA).